The following is a 285-amino-acid chain: Inositol oxygenase (285 aa).

R29 contributes to the substrate binding site. S33 carries the post-translational modification Phosphoserine. 85 to 88 serves as a coordination point for substrate; sequence DESD. Residues H98, H123, and D124 each coordinate Fe cation. Residues K127 and 141–142 each bind substrate; that span reads GD. 3 residues coordinate Fe cation: H194, H220, and D253. Position 220-221 (220-221) interacts with substrate; that stretch reads HS.

It belongs to the myo-inositol oxygenase family. Requires Fe cation as cofactor. Kidney specific. Renal proximal tubules.

It localises to the cytoplasm. The catalysed reaction is myo-inositol + O2 = D-glucuronate + H2O + H(+). Its pathway is polyol metabolism; myo-inositol degradation into D-glucuronate; D-glucuronate from myo-inositol: step 1/1. This chain is Inositol oxygenase (Miox), found in Mus musculus (Mouse).